A 189-amino-acid chain; its full sequence is Probable nicotinate-nucleotide adenylyltransferase (189 aa).

Belongs to the NadD family.

It carries out the reaction nicotinate beta-D-ribonucleotide + ATP + H(+) = deamido-NAD(+) + diphosphate. It functions in the pathway cofactor biosynthesis; NAD(+) biosynthesis; deamido-NAD(+) from nicotinate D-ribonucleotide: step 1/1. Functionally, catalyzes the reversible adenylation of nicotinate mononucleotide (NaMN) to nicotinic acid adenine dinucleotide (NaAD). This chain is Probable nicotinate-nucleotide adenylyltransferase, found in Bacillus cereus (strain Q1).